Consider the following 353-residue polypeptide: UPF0283 membrane protein YcjF (353 aa).

A disordered region spans residues 16–35; sequence KEESTSAFKAQQTFSEAESR. Over residues 20-31 the composition is skewed to polar residues; the sequence is TSAFKAQQTFSE. 3 helical membrane passes run 70–90, 100–120, and 213–233; these read MVMGGLALFGASVVGQGVQWT, VALGGCAAGALIIGAGVGSVV, and ESTLMIAVSPLALVDMAFIAW.

The protein belongs to the UPF0283 family.

Its subcellular location is the cell inner membrane. This Salmonella heidelberg (strain SL476) protein is UPF0283 membrane protein YcjF.